We begin with the raw amino-acid sequence, 954 residues long: Glycine dehydrogenase (decarboxylating) (954 aa).

The residue at position 706 (lysine 706) is an N6-(pyridoxal phosphate)lysine.

This sequence belongs to the GcvP family. The glycine cleavage system is composed of four proteins: P, T, L and H. Pyridoxal 5'-phosphate is required as a cofactor.

The catalysed reaction is N(6)-[(R)-lipoyl]-L-lysyl-[glycine-cleavage complex H protein] + glycine + H(+) = N(6)-[(R)-S(8)-aminomethyldihydrolipoyl]-L-lysyl-[glycine-cleavage complex H protein] + CO2. Functionally, the glycine cleavage system catalyzes the degradation of glycine. The P protein binds the alpha-amino group of glycine through its pyridoxal phosphate cofactor; CO(2) is released and the remaining methylamine moiety is then transferred to the lipoamide cofactor of the H protein. The sequence is that of Glycine dehydrogenase (decarboxylating) from Pseudomonas syringae pv. syringae (strain B728a).